A 125-amino-acid chain; its full sequence is Small ribosomal subunit protein uS12 (125 aa).

Aspartate 89 is subject to 3-methylthioaspartic acid. Residues 106-125 (GVKDRKQSRSKYGAKRPKKA) are disordered. Basic residues predominate over residues 113-125 (SRSKYGAKRPKKA).

Belongs to the universal ribosomal protein uS12 family. Part of the 30S ribosomal subunit. Contacts proteins S8 and S17. May interact with IF1 in the 30S initiation complex.

Its function is as follows. With S4 and S5 plays an important role in translational accuracy. In terms of biological role, interacts with and stabilizes bases of the 16S rRNA that are involved in tRNA selection in the A site and with the mRNA backbone. Located at the interface of the 30S and 50S subunits, it traverses the body of the 30S subunit contacting proteins on the other side and probably holding the rRNA structure together. The combined cluster of proteins S8, S12 and S17 appears to hold together the shoulder and platform of the 30S subunit. In Azoarcus sp. (strain BH72), this protein is Small ribosomal subunit protein uS12.